A 327-amino-acid polypeptide reads, in one-letter code: Zinc transport protein ZntB (327 aa).

Residues 1–273 (MEAIKGSDVN…ARRTYTMSLM (273 aa)) lie on the Cytoplasmic side of the membrane. Residues 274–294 (AMVFLPSTFLTGLFGVNLGGI) form a helical membrane-spanning segment. Residues 295–300 (PGGGWQ) are Periplasmic-facing. Residues 301–321 (FGFSIFCILLVVLIGGVALWL) form a helical membrane-spanning segment. Topologically, residues 322–327 (HRSKWL) are cytoplasmic.

This sequence belongs to the CorA metal ion transporter (MIT) (TC 1.A.35) family.

The protein localises to the cell inner membrane. The enzyme catalyses Zn(2+)(out) + H(+)(out) = Zn(2+)(in) + H(+)(in). Functionally, zinc transporter. Acts as a Zn(2+):proton symporter, which likely mediates zinc ion uptake. This is Zinc transport protein ZntB from Escherichia coli O6:K15:H31 (strain 536 / UPEC).